The following is a 130-amino-acid chain: Small ribosomal subunit protein uS9 (130 aa).

This sequence belongs to the universal ribosomal protein uS9 family.

This chain is Small ribosomal subunit protein uS9, found in Azotobacter vinelandii (strain DJ / ATCC BAA-1303).